Consider the following 241-residue polypeptide: 3-deoxy-D-manno-octulosonic acid kinase (241 aa).

Residue Asp-171 is part of the active site.

Belongs to the protein kinase superfamily. KdkA/RfaP family.

The protein localises to the cell inner membrane. The enzyme catalyses an alpha-Kdo-(2-&gt;6)-lipid IVA + ATP = a 4-O-phospho-alpha-Kdo-(2-&gt;6)-lipid IVA + ADP + H(+). Its pathway is bacterial outer membrane biogenesis; LPS core biosynthesis. Catalyzes the ATP-dependent phosphorylation of the 3-deoxy-D-manno-octulosonic acid (Kdo) residue in Kdo-lipid IV(A) at the 4-OH position. In Haemophilus influenzae (strain PittGG), this protein is 3-deoxy-D-manno-octulosonic acid kinase.